The primary structure comprises 278 residues: SPX domain-containing protein 2 (278 aa).

The 162-residue stretch at methionine 1 to glutamine 162 folds into the SPX domain. Disordered stretches follow at residues proline 191–valine 242 and glycine 255–arginine 278.

In terms of assembly, interacts (via SPX domain) with PHR2 (via C-terminus). Interacts with RLI1 in the nucleus to prevents its positive regulation of leaf inclination during phosphate (Pi) starvation.

Its subcellular location is the nucleus. In terms of biological role, inhibits PHR2 DNA-binding activity via a phosphate (Pi)-dependent protein interaction. Together with SPX1, plays a negative role in the regulation of leaf inclination by preventing RLI1 transcription factor activity in Pi depleted conditions. This Oryza sativa subsp. indica (Rice) protein is SPX domain-containing protein 2.